Consider the following 70-residue polypeptide: Beta-defensin 131B (70 aa).

Positions 1-22 (MRVLFFVFGVLSLMSTVPPTRS) are cleaved as a signal peptide. Cystine bridges form between Cys29–Cys56, Cys36–Cys50, and Cys40–Cys57.

The protein belongs to the beta-defensin family.

Its subcellular location is the secreted. In terms of biological role, has antibacterial activity. This is Beta-defensin 131B from Homo sapiens (Human).